Reading from the N-terminus, the 164-residue chain is Putative deoxyuridine 5'-triphosphate nucleotidohydrolase (164 aa).

Position 65–67 (65–67 (RSG)) interacts with substrate. Lys71 is modified (N6-acetyllysine; by host). Residues 79-82 (GVVD), Gly90, and 138-139 (YG) contribute to the substrate site.

It belongs to the dUTPase family. Requires Mg(2+) as cofactor.

It carries out the reaction dUTP + H2O = dUMP + diphosphate + H(+). This enzyme is involved in nucleotide metabolism: it produces dUMP, the immediate precursor of thymidine nucleotides and it decreases the intracellular concentration of dUTP so that uracil cannot be incorporated into DNA. This chain is Putative deoxyuridine 5'-triphosphate nucleotidohydrolase, found in Dryophytes versicolor (chameleon treefrog).